The chain runs to 257 residues: Small ribosomal subunit protein uS2 (257 aa).

The segment at 229 to 257 is disordered; sequence QFTPATTSSQEVDKASEQVEIAADDIDEE.

This sequence belongs to the universal ribosomal protein uS2 family.

The polypeptide is Small ribosomal subunit protein uS2 (Caldicellulosiruptor bescii (strain ATCC BAA-1888 / DSM 6725 / KCTC 15123 / Z-1320) (Anaerocellum thermophilum)).